Reading from the N-terminus, the 157-residue chain is Histone H2B.3 (157 aa).

A disordered region spans residues 1 to 64 (MAPKKEEKPA…DKKSKKKAKV (64 aa)). Residues 26–42 (KAVKAPKKKEKKAPAKK) show a composition bias toward basic residues. Residue K153 forms a Glycyl lysine isopeptide (Lys-Gly) (interchain with G-Cter in ubiquitin) linkage.

It belongs to the histone H2B family. In terms of assembly, the nucleosome is a histone octamer containing two molecules each of H2A, H2B, H3 and H4 assembled in one H3-H4 heterotetramer and two H2A-H2B heterodimers. The octamer wraps approximately 147 bp of DNA. In terms of processing, monoubiquitinated to form H2BK143ub1; may give a specific tag for epigenetic transcriptional activation.

It localises to the nucleus. The protein resides in the chromosome. Functionally, core component of nucleosome. Nucleosomes wrap and compact DNA into chromatin, limiting DNA accessibility to the cellular machineries which require DNA as a template. Histones thereby play a central role in transcription regulation, DNA repair, DNA replication and chromosomal stability. DNA accessibility is regulated via a complex set of post-translational modifications of histones, also called histone code, and nucleosome remodeling. This chain is Histone H2B.3, found in Volvox carteri (Green alga).